A 319-amino-acid chain; its full sequence is Probable cell division protein WhiA (319 aa).

The segment at residues 277 to 310 (SLEELGKLAEPAMTKDAIAGRIRRLLCLADKRAK) is a DNA-binding region (H-T-H motif).

The protein belongs to the WhiA family.

Involved in cell division and chromosome segregation. This is Probable cell division protein WhiA from Tropheryma whipplei (strain Twist) (Whipple's bacillus).